Consider the following 227-residue polypeptide: Transmembrane emp24 domain-containing protein 4 (227 aa).

The first 29 residues, 1-29 (MAGVGAGPLRAMGRQALLLLALCATGAQG), serve as a signal peptide directing secretion. The Lumenal portion of the chain corresponds to 30 to 194 (LYFHIGETEK…RLTSESTNQR (165 aa)). The region spanning 39–137 (KRCFIEEIPD…KLRVHLDIQV (99 aa)) is the GOLD domain. A glycan (N-linked (GlcNAc...) asparagine) is linked at asparagine 117. Positions 147-176 (IAAKDKLTELQLRARQLLDQVEQIQKEQDY) form a coiled coil. Residues 195-212 (VLWWSIAQTVILILTGIW) form a helical membrane-spanning segment. Residues 213 to 227 (QMRHLKSFFEAKKLV) are Cytoplasmic-facing. The COPII vesicle coat-binding signature appears at 220-221 (FF). The COPI vesicle coat-binding signature appears at 220 to 227 (FFEAKKLV).

The protein belongs to the EMP24/GP25L family.

It is found in the endoplasmic reticulum membrane. Functionally, involved in vesicular protein trafficking, mainly in the early secretory pathway. targeting. Involved in the maintenance of the Golgi apparatus. Appears to play a role in the biosynthesis of secreted cargo including processing. Involved in endoplasmic reticulum stress response. May play a role in the regulation of heat-shock response and apoptosis. The protein is Transmembrane emp24 domain-containing protein 4 (TMED4) of Homo sapiens (Human).